The sequence spans 473 residues: Ribulose bisphosphate carboxylase large chain 1 (473 aa).

Substrate contacts are provided by Asn116 and Thr166. The active-site Proton acceptor is Lys168. Lys170 serves as a coordination point for substrate. Residues Lys194, Asp196, and Glu197 each coordinate Mg(2+). N6-carboxylysine is present on Lys194. Residue His287 is the Proton acceptor of the active site. Positions 288, 320, and 372 each coordinate substrate.

The protein belongs to the RuBisCO large chain family. Type I subfamily. In terms of assembly, heterohexadecamer of 8 large chains and 8 small chains. The cofactor is Mg(2+).

It catalyses the reaction 2 (2R)-3-phosphoglycerate + 2 H(+) = D-ribulose 1,5-bisphosphate + CO2 + H2O. The enzyme catalyses D-ribulose 1,5-bisphosphate + O2 = 2-phosphoglycolate + (2R)-3-phosphoglycerate + 2 H(+). Its function is as follows. RuBisCO catalyzes two reactions: the carboxylation of D-ribulose 1,5-bisphosphate, the primary event in carbon dioxide fixation, as well as the oxidative fragmentation of the pentose substrate. Both reactions occur simultaneously and in competition at the same active site. This is Ribulose bisphosphate carboxylase large chain 1 from Acidithiobacillus ferrooxidans (Thiobacillus ferrooxidans).